Here is a 65-residue protein sequence, read N- to C-terminus: uncharacterized protein (65 aa).

This is an uncharacterized protein from Pasteurella multocida (strain Pm70).